The sequence spans 320 residues: uncharacterized protein (320 aa).

The next 7 helical transmembrane spans lie at 24-44 (FEFS…IFFI), 65-85 (FVLS…LWSL), 105-125 (TTSC…FIVV), 132-152 (SWFV…IAIL), 179-199 (ISLT…IYTF), 226-246 (MIPI…YFGY), and 253-275 (TSRW…MLSL).

Its subcellular location is the membrane. This is an uncharacterized protein from Caenorhabditis elegans.